We begin with the raw amino-acid sequence, 152 residues long: Large ribosomal subunit protein uL15 (152 aa).

The span at 1 to 12 (MTSTLNTLKSNT) shows a compositional bias: polar residues. Residues 1-57 (MTSTLNTLKSNTGSRKKKLRKGRGIAAGQGASCGFGMRGQKSRSGRPTRPGFEGGQM) form a disordered region. Positions 14–23 (SRKKKLRKGR) are enriched in basic residues. Residues 25–37 (IAAGQGASCGFGM) show a composition bias toward gly residues.

Belongs to the universal ribosomal protein uL15 family. In terms of assembly, part of the 50S ribosomal subunit.

Binds to the 23S rRNA. The sequence is that of Large ribosomal subunit protein uL15 from Prochlorococcus marinus subsp. pastoris (strain CCMP1986 / NIES-2087 / MED4).